The following is a 134-amino-acid chain: Insulin-like peptide 4 (134 aa).

A signal peptide spans 1-26; sequence MSLIRLGLALLLLLATVSQLLQPVQG. Disulfide bonds link cysteine 31-cysteine 120, cysteine 43-cysteine 133, and cysteine 119-cysteine 124. A propeptide spans 54 to 108 (connecting peptide); sequence SSASKDARVRDLIRKLQQPDEDIEQETETGRLKQKHTDADTEKGVPPAVGSGRKL. The tract at residues 72-107 is disordered; it reads PDEDIEQETETGRLKQKHTDADTEKGVPPAVGSGRK. Basic and acidic residues predominate over residues 81–96; it reads ETGRLKQKHTDADTEK.

The protein belongs to the insulin family. In terms of assembly, heterodimer of a B chain and an A chain linked by two disulfide bonds. As to expression, expressed at a high level in the embryonic mesoderm, with expression continuing after gastrulation and reducing from stage 12 onwards. Highly expressed in the embryonic anterior midgut rudiment and larval midgut.

The protein resides in the secreted. Functionally, possible ligand of InR/insulin-like receptor. In Drosophila melanogaster (Fruit fly), this protein is Insulin-like peptide 4.